Consider the following 370-residue polypeptide: 3-isopropylmalate dehydrogenase (370 aa).

76-89 (GPKWDQNPSELRPE) contacts NAD(+). Residues R96, R106, R134, and D224 each coordinate substrate. Residues D224, D248, and D252 each coordinate Mg(2+). 282 to 294 (GSAPDIAGQNIAN) provides a ligand contact to NAD(+).

It belongs to the isocitrate and isopropylmalate dehydrogenases family. LeuB type 1 subfamily. Homodimer. The cofactor is Mg(2+). Mn(2+) is required as a cofactor.

Its subcellular location is the cytoplasm. It catalyses the reaction (2R,3S)-3-isopropylmalate + NAD(+) = 4-methyl-2-oxopentanoate + CO2 + NADH. It participates in amino-acid biosynthesis; L-leucine biosynthesis; L-leucine from 3-methyl-2-oxobutanoate: step 3/4. Catalyzes the oxidation of 3-carboxy-2-hydroxy-4-methylpentanoate (3-isopropylmalate) to 3-carboxy-4-methyl-2-oxopentanoate. The product decarboxylates to 4-methyl-2 oxopentanoate. This is 3-isopropylmalate dehydrogenase from Bacillus licheniformis (strain ATCC 14580 / DSM 13 / JCM 2505 / CCUG 7422 / NBRC 12200 / NCIMB 9375 / NCTC 10341 / NRRL NRS-1264 / Gibson 46).